The following is a 124-amino-acid chain: Small ribosomal subunit protein uS13 (124 aa).

The segment at 94-124 (RGMPVRGQRTKTNARTRKGPKRTIAGKKKAR) is disordered.

The protein belongs to the universal ribosomal protein uS13 family. As to quaternary structure, part of the 30S ribosomal subunit. Forms a loose heterodimer with protein S19. Forms two bridges to the 50S subunit in the 70S ribosome.

Its function is as follows. Located at the top of the head of the 30S subunit, it contacts several helices of the 16S rRNA. In the 70S ribosome it contacts the 23S rRNA (bridge B1a) and protein L5 of the 50S subunit (bridge B1b), connecting the 2 subunits; these bridges are implicated in subunit movement. Contacts the tRNAs in the A and P-sites. The polypeptide is Small ribosomal subunit protein uS13 (Mycobacterium tuberculosis (strain ATCC 25177 / H37Ra)).